The primary structure comprises 267 residues: Cell division protein FtsQ (267 aa).

The Cytoplasmic portion of the chain corresponds to 1 to 32 (MRKKTSSNKKKQTKKTNNISLRRKLRLIYKKA). The chain crosses the membrane as a helical span at residues 33–53 (ILGLKIALIIFVCLFVFTKYF). At 54–267 (AGIKTYLTTN…DKNKYYIEKY (214 aa)) the chain is on the periplasmic side. The POTRA domain maps to 73-141 (FKLENVIIEG…NTVYIKLFER (69 aa)).

Belongs to the FtsQ/DivIB family. FtsQ subfamily.

It is found in the cell inner membrane. Essential cell division protein. This Rickettsia felis (strain ATCC VR-1525 / URRWXCal2) (Rickettsia azadi) protein is Cell division protein FtsQ.